The following is a 182-amino-acid chain: Large ribosomal subunit protein uL5 (182 aa).

This sequence belongs to the universal ribosomal protein uL5 family. In terms of assembly, part of the 50S ribosomal subunit; part of the 5S rRNA/L5/L18/L25 subcomplex. Contacts the 5S rRNA and the P site tRNA. Forms a bridge to the 30S subunit in the 70S ribosome.

This is one of the proteins that bind and probably mediate the attachment of the 5S RNA into the large ribosomal subunit, where it forms part of the central protuberance. In the 70S ribosome it contacts protein S13 of the 30S subunit (bridge B1b), connecting the 2 subunits; this bridge is implicated in subunit movement. Contacts the P site tRNA; the 5S rRNA and some of its associated proteins might help stabilize positioning of ribosome-bound tRNAs. The polypeptide is Large ribosomal subunit protein uL5 (Coxiella burnetii (strain CbuG_Q212) (Coxiella burnetii (strain Q212))).